Consider the following 495-residue polypeptide: MASGILLNVKEEVTCPICLELLTEPLSLHCGHSFCQACITANHKKSMLYKEGERSCPVCRISYQPENIQPNRHVANIVEKLREVKLSPEEGQKVDHCARHGEKLLLFCQEDSKVICWLCERSQEHRGHHTFLMEEVAQEYHVKLQTALEMLRQKQQEAEKLEADIREEKASWKIQIDHDKTNVLADFEQLREILDREESNELQNLEKEEEDILKSLTKSETKMVQQTQYVRELISDLEHRLQGSMMELLQGVDGIIKRIENMTLKKPKTFHKNQRRVFRAPDLKGMLDMFRELTDVRRCWVDVTLAPNNISHVVIAEDKRQVSSRNPQIMYRTQGTLFQSLTNFIYCTGILGSQSITSGKHYWEVDVSKKSAWILGVCAGFQPDAMYNIEQNENYQPKYGYWVIGLQEGVKYSVFQDGSSHTPFAPFIVPLSVIICPDRVGVFVDYEACTVSFFNITNHGFLIYKFSQCSFSKPVFPYLNPRKCTVPMTLCSPSS.

Residue alanine 2 is modified to N-acetylalanine. The RING-type zinc-finger motif lies at cysteine 15 to arginine 60. Serine 87 carries the phosphoserine modification. A B box-type zinc finger spans residues glutamine 92–methionine 133. Positions 97, 100, 119, and 125 each coordinate Zn(2+). The stretch at alanine 137–methionine 223 forms a coiled coil. Residues phenylalanine 187 to asparagine 200 are required for interaction with GABARAP and for autophagy. The B30.2/SPRY domain maps to leucine 283–serine 495.

Belongs to the TRIM/RBCC family. Can form homodimers and homotrimers. In addition to lower-order dimerization, also exhibits a higher-order multimerization and both low- and high-order multimerizations are essential for its restriction activity. Interacts with BTBD1 and BTBD2. Interacts with PSMC4, PSMC5, PSMD7 and HSPA8/HSC70. Interacts (via B30.2/SPRY domain) with HSPA1A/B. Interacts with PSMC2, MAP3K7/TAK1, TAB2 and TAB3. Interacts with SQSTM1. Interacts with TRIM6 and TRIM34. Interacts with ULK1 (phosphorylated form), GABARAP, GABARAPL1, GABARAPL2, MAP1LC3A, MAP1LC3C and BECN1. Post-translationally, degraded in a proteasome-independent fashion in the absence of viral infection but in a proteasome-dependent fashion following exposure to restriction sensitive virus. In terms of processing, autoubiquitinated in a RING finger- and UBE2D2-dependent manner. Monoubiquitinated by TRIM21. Deubiquitinated by Yersinia YopJ. Ubiquitination may not lead to proteasomal degradation.

It is found in the cytoplasm. Its subcellular location is the nucleus. It catalyses the reaction S-ubiquitinyl-[E2 ubiquitin-conjugating enzyme]-L-cysteine + [acceptor protein]-L-lysine = [E2 ubiquitin-conjugating enzyme]-L-cysteine + N(6)-ubiquitinyl-[acceptor protein]-L-lysine.. It functions in the pathway protein modification; protein ubiquitination. Its function is as follows. Capsid-specific restriction factor that prevents infection from non-host-adapted retroviruses. Blocks viral replication early in the life cycle, after viral entry but before reverse transcription. In addition to acting as a capsid-specific restriction factor, also acts as a pattern recognition receptor that activates innate immune signaling in response to the retroviral capsid lattice. Binding to the viral capsid triggers its E3 ubiquitin ligase activity, and in concert with the heterodimeric ubiquitin conjugating enzyme complex UBE2V1-UBE2N (also known as UBC13-UEV1A complex) generates 'Lys-63'-linked polyubiquitin chains, which in turn are catalysts in the autophosphorylation of the MAP3K7/TAK1 complex (includes TAK1, TAB2, and TAB3). Activation of the MAP3K7/TAK1 complex by autophosphorylation results in the induction and expression of NF-kappa-B and MAPK-responsive inflammatory genes, thereby leading to an innate immune response in the infected cell. Plays a role in regulating autophagy through activation of autophagy regulator BECN1 by causing its dissociation from its inhibitors BCL2 and TAB2. The chain is Tripartite motif-containing protein 5 (TRIM5) from Macaca nemestrina (Pig-tailed macaque).